Reading from the N-terminus, the 551-residue chain is L-lactate permease (551 aa).

A run of 13 helical transmembrane segments spans residues 13-33, 37-57, 69-89, 131-151, 159-179, 194-214, 220-240, 244-264, 366-386, 405-425, 438-458, 494-514, and 530-550; these read NIWL…FALI, LKGY…ALLF, VVYG…AAVF, GAAG…GLGF, LCLI…PILV, MVGR…MAIM, IKET…AQYL, FIGP…CLTL, FDWF…SIVW, LALP…SNYS, TGHA…FLTG, VTGK…VGLV, and IFTC…TWMI.

This sequence belongs to the lactate permease family.

The protein localises to the cell inner membrane. The enzyme catalyses (S)-lactate(in) + H(+)(in) = (S)-lactate(out) + H(+)(out). The catalysed reaction is (R)-lactate(in) + H(+)(in) = (R)-lactate(out) + H(+)(out). It catalyses the reaction glycolate(in) + H(+)(in) = glycolate(out) + H(+)(out). Its activity is regulated as follows. Inhibited by the proton ionophore carbonyl cyanide m-chlorophenylhydrazone (CCCP). Functionally, uptake of L-lactate across the membrane. Can also transport D-lactate and glycolate. Seems to be driven by a proton motive force. This chain is L-lactate permease, found in Escherichia coli (strain K12).